The chain runs to 244 residues: tRNA (guanine-N(1)-)-methyltransferase (244 aa).

Residues G123 and 143 to 148 contribute to the S-adenosyl-L-methionine site; that span reads LGDFVM.

Belongs to the RNA methyltransferase TrmD family. Homodimer.

It is found in the cytoplasm. The catalysed reaction is guanosine(37) in tRNA + S-adenosyl-L-methionine = N(1)-methylguanosine(37) in tRNA + S-adenosyl-L-homocysteine + H(+). Functionally, specifically methylates guanosine-37 in various tRNAs. This Ruegeria sp. (strain TM1040) (Silicibacter sp.) protein is tRNA (guanine-N(1)-)-methyltransferase.